Consider the following 98-residue polypeptide: Small ribosomal subunit protein bS20 (98 aa).

The span at 1-12 (MAPKKTTKKGGP) shows a compositional bias: basic residues. The interval 1 to 20 (MAPKKTTKKGGPQKRPSAEK) is disordered.

It belongs to the bacterial ribosomal protein bS20 family.

Its function is as follows. Binds directly to 16S ribosomal RNA. The protein is Small ribosomal subunit protein bS20 of Chlamydia caviae (strain ATCC VR-813 / DSM 19441 / 03DC25 / GPIC) (Chlamydophila caviae).